Here is an 870-residue protein sequence, read N- to C-terminus: Adhesin AWP1 (870 aa).

Residues 1 to 18 (MSLITIFAFFIKATLVLS) form the signal peptide. A glycan (N-linked (GlcNAc...) asparagine) is linked at Asn-224. Residues Cys-284 and Cys-322 are joined by a disulfide bond. The interval 329–835 (ITPSSSVEPS…TRQTSVIAPG (507 aa)) is disordered. Positions 331 to 566 (PSSSVEPSSS…SSSAVVPTSS (236 aa)) are enriched in low complexity. Residues 567 to 576 (AGGGNGGDNG) are compositionally biased toward gly residues. Positions 577-641 (QPGADGQPGA…PGAAGQPGAA (65 aa)) are enriched in low complexity. Over residues 642-652 (GQPGAGSGGGS) the composition is skewed to gly residues. N-linked (GlcNAc...) asparagine glycosylation occurs at Asn-669. Gly residues predominate over residues 675–721 (SGTGNGQAGSGQAGSGQVGSGQAGAGQAGSGQAGAGQAGSGQAGAGQ). Polar residues-rich tracts occupy residues 724–735 (LDNTASGQSEGG) and 792–801 (GSGTDQSSGR).

It localises to the secreted. The protein localises to the cell wall. May play a role in cell adhesion. The polypeptide is Adhesin AWP1 (Candida glabrata (strain ATCC 2001 / BCRC 20586 / JCM 3761 / NBRC 0622 / NRRL Y-65 / CBS 138) (Yeast)).